The following is a 957-amino-acid chain: MQPMVMQGCPYTLPRCHDWQAADQFHHSSSLRSTCPHPQVRAAVTSPAPPQDGAGVPCLSLKLLNGSVGASGPLEPPAMNLCWNEIKKKSHNLRARLEAFSDHSGKLQLPLQEIIDWLSQKDEELSAQLPLQGDVALVQQEKETHAAFMEEVKSRGPYIYSVLESAQAFLSQHPFEELEEPHSESKDTSPKQRIQNLSRFVWKQATVASELWEKLTARCVDQHRHIERTLEQLLEIQGAMEELSTTLSQAEGVRATWEPIGDLFIDSLPEHIQAIKLFKEEFSPMKDGVKLVNDLAHQLAISDVHLSMENSQALEQINVRWKQLQASVSERLKQLQDAHRDFGPGSQHFLSSSVQVPWERAISPNKVPYYINHQAQTTCWDHPKMTELYQTLADLNNIKFSAYRTAMKLRRVQKALRLDLVTLTTALEIFNEHDLQASEHVMDVVEVIHCLTALYERLEEERGILVNVPLCVDMSLNWLLNVFDSGRSGKMRALSFKTGIACLCGTEVKEKLQYLFSQVANSGSQCDQRHLGVLLHEAIQVPRQLGEVAAFGGSNVEPSVRSCFRFSTGKPVIEASQFLEWVNLEPQSMVWLAVLHRVTIAEQVKHQTKCSICRQCPIKGFRYRSLKQFNVDICQTCFLTGRASKGNKLHYPIMEYYTPTTSSENMRDFATTLKNKFRSKHYFSKHPQRGYLPVQSVLEADYSETPASSPMWPHADTHSRIEHFASRLAEMESQNCSFFNDSLSPDDSIDEDQYLLRHSSPITDREPAFGQQAPCSVATESKGELQKILAHLEDENRILQGELRRLKWQHEEAAEAPSLADGSTEAATDHRNEELLAEARILRQHKSRLETRMQILEDHNKQLESQLQRLRELLLQPPTESDGSGSAGSSLASSPQQSEGSHPREKGQTTPDTEAADDVGSKSQDVSLCLEDIMEKLRHAFPSVRSSDVTANTLLAS.

2 Spectrin repeats span residues 102 to 179 (DHSG…EELE) and 231 to 337 (EQLL…QLQD). The 26-residue stretch at 358-383 (WERAISPNKVPYYINHQAQTTCWDHP) folds into the WW domain. The segment at 605 to 661 (KHQTKCSICRQCPIKGFRYRSLKQFNVDICQTCFLTGRASKGNKLHYPIMEYYTPTT) adopts a ZZ-type; degenerate zinc-finger fold. The Zn(2+) site is built by Cys-610, Cys-613, Cys-634, and Cys-637. Ser-748 is subject to Phosphoserine. Low complexity predominate over residues 877–900 (PPTESDGSGSAGSSLASSPQQSEG). A disordered region spans residues 877 to 923 (PPTESDGSGSAGSSLASSPQQSEGSHPREKGQTTPDTEAADDVGSKS). At Thr-910 the chain carries Phosphothreonine.

Interacts with PRX; this enhances phosphorylation. Identified in a dystroglycan complex that contains at least PRX, DRP2, UTRN, DMD and DAG1. As to expression, detected in fetal brain.

The protein resides in the postsynaptic density. It is found in the cell projection. Its subcellular location is the dendrite. It localises to the perikaryon. The protein localises to the cell membrane. Required for normal myelination and for normal organization of the cytoplasm and the formation of Cajal bands in myelinating Schwann cells. Required for normal PRX location at appositions between the abaxonal surface of the myelin sheath and the Schwann cell plasma membrane. Possibly involved in membrane-cytoskeleton interactions of the central nervous system. This Homo sapiens (Human) protein is Dystrophin-related protein 2 (DRP2).